A 128-amino-acid polypeptide reads, in one-letter code: Large ribosomal subunit protein bL17 (128 aa).

It belongs to the bacterial ribosomal protein bL17 family. In terms of assembly, part of the 50S ribosomal subunit. Contacts protein L32.

The protein is Large ribosomal subunit protein bL17 of Pseudomonas entomophila (strain L48).